A 172-amino-acid chain; its full sequence is Auxin-responsive protein IAA30 (172 aa).

The segment covering 1 to 18 has biased composition (low complexity); that stretch reads MGRGRSSSSSSIESSCKS. The segment at 1–28 is disordered; it reads MGRGRSSSSSSIESSCKSNPFGVSSSNT. Residues 35–39 carry the EAR-like (transcriptional repression) motif; that stretch reads LRLGL. The PB1 domain maps to 82-171; it reads SFYVKVNMEG…RRLKISRAYH (90 aa).

It belongs to the Aux/IAA family. As to quaternary structure, homodimers and heterodimers.

It localises to the nucleus. Its function is as follows. Aux/IAA proteins are short-lived transcriptional factors that function as repressors of early auxin response genes at low auxin concentrations. Repression is thought to result from the interaction with auxin response factors (ARFs), proteins that bind to the auxin-responsive promoter element (AuxRE). Formation of heterodimers with ARF proteins may alter their ability to modulate early auxin response genes expression. In Arabidopsis thaliana (Mouse-ear cress), this protein is Auxin-responsive protein IAA30 (IAA30).